A 344-amino-acid polypeptide reads, in one-letter code: Holliday junction branch migration complex subunit RuvB (344 aa).

Residues 1-185 (MSTSRSDALK…FGIDFRYDYY (185 aa)) form a large ATPase domain (RuvB-L) region. ATP is bound by residues Leu24, Arg25, Gly66, Lys69, Thr70, Thr71, 132–134 (EDY), Arg175, Tyr185, and Arg222. A Mg(2+)-binding site is contributed by Thr70. Residues 186–256 (TADLLQEITQ…IADRALNALD (71 aa)) form a small ATPAse domain (RuvB-S) region. The interval 259–344 (EEGLDDMDAR…AADQDLFDQE (86 aa)) is head domain (RuvB-H). DNA is bound by residues Arg314 and Arg319.

It belongs to the RuvB family. Homohexamer. Forms an RuvA(8)-RuvB(12)-Holliday junction (HJ) complex. HJ DNA is sandwiched between 2 RuvA tetramers; dsDNA enters through RuvA and exits via RuvB. An RuvB hexamer assembles on each DNA strand where it exits the tetramer. Each RuvB hexamer is contacted by two RuvA subunits (via domain III) on 2 adjacent RuvB subunits; this complex drives branch migration. In the full resolvosome a probable DNA-RuvA(4)-RuvB(12)-RuvC(2) complex forms which resolves the HJ.

The protein localises to the cytoplasm. The enzyme catalyses ATP + H2O = ADP + phosphate + H(+). In terms of biological role, the RuvA-RuvB-RuvC complex processes Holliday junction (HJ) DNA during genetic recombination and DNA repair, while the RuvA-RuvB complex plays an important role in the rescue of blocked DNA replication forks via replication fork reversal (RFR). RuvA specifically binds to HJ cruciform DNA, conferring on it an open structure. The RuvB hexamer acts as an ATP-dependent pump, pulling dsDNA into and through the RuvAB complex. RuvB forms 2 homohexamers on either side of HJ DNA bound by 1 or 2 RuvA tetramers; 4 subunits per hexamer contact DNA at a time. Coordinated motions by a converter formed by DNA-disengaged RuvB subunits stimulates ATP hydrolysis and nucleotide exchange. Immobilization of the converter enables RuvB to convert the ATP-contained energy into a lever motion, pulling 2 nucleotides of DNA out of the RuvA tetramer per ATP hydrolyzed, thus driving DNA branch migration. The RuvB motors rotate together with the DNA substrate, which together with the progressing nucleotide cycle form the mechanistic basis for DNA recombination by continuous HJ branch migration. Branch migration allows RuvC to scan DNA until it finds its consensus sequence, where it cleaves and resolves cruciform DNA. The chain is Holliday junction branch migration complex subunit RuvB from Salinibacter ruber (strain DSM 13855 / M31).